Consider the following 193-residue polypeptide: Holliday junction branch migration complex subunit RuvA (193 aa).

The interval 1 to 64 (MIGRIAGTLI…EDAHLLYGFG (64 aa)) is domain I. The domain II stretch occupies residues 65-143 (TAAERETFRQ…ADLGTVPGGP (79 aa)). The segment at 144–151 (AVSDDAVD) is flexible linker. The tract at residues 151-193 (DVLNALLALGYSDKEAALAIKQVPAGTGVSEGIKLALKALSKG) is domain III.

The protein belongs to the RuvA family. In terms of assembly, homotetramer. Forms an RuvA(8)-RuvB(12)-Holliday junction (HJ) complex. HJ DNA is sandwiched between 2 RuvA tetramers; dsDNA enters through RuvA and exits via RuvB. An RuvB hexamer assembles on each DNA strand where it exits the tetramer. Each RuvB hexamer is contacted by two RuvA subunits (via domain III) on 2 adjacent RuvB subunits; this complex drives branch migration. In the full resolvosome a probable DNA-RuvA(4)-RuvB(12)-RuvC(2) complex forms which resolves the HJ.

The protein resides in the cytoplasm. Its function is as follows. The RuvA-RuvB-RuvC complex processes Holliday junction (HJ) DNA during genetic recombination and DNA repair, while the RuvA-RuvB complex plays an important role in the rescue of blocked DNA replication forks via replication fork reversal (RFR). RuvA specifically binds to HJ cruciform DNA, conferring on it an open structure. The RuvB hexamer acts as an ATP-dependent pump, pulling dsDNA into and through the RuvAB complex. HJ branch migration allows RuvC to scan DNA until it finds its consensus sequence, where it cleaves and resolves the cruciform DNA. The chain is Holliday junction branch migration complex subunit RuvA from Ralstonia pickettii (strain 12J).